Reading from the N-terminus, the 227-residue chain is Superoxide dismutase [Cu-Zn] (227 aa).

An N-terminal signal peptide occupies residues 1–19 (MPKLLPPVVLAGCVVALGA). Cys-20 carries the N-palmitoyl cysteine lipid modification. A lipid anchor (S-diacylglycerol cysteine) is attached at Cys-20. The interval 23 to 55 (PQHASSLPGTTPAVWTGSPSPSGAGAAEAAPAA) is disordered. Low complexity predominate over residues 39-55 (GSPSPSGAGAAEAAPAA). 2 residues coordinate Cu cation: His-103 and His-105. Residues Cys-110 and Cys-221 are joined by a disulfide bond. Asp-145 contacts Zn(2+). His-182 provides a ligand contact to Cu cation.

It belongs to the Cu-Zn superoxide dismutase family. Cu cation is required as a cofactor. Requires Zn(2+) as cofactor.

The protein resides in the cell membrane. The enzyme catalyses 2 superoxide + 2 H(+) = H2O2 + O2. Its function is as follows. Destroys radicals which are normally produced within the cells and which are toxic to biological systems. May play a role in favoring mycobacterial survival in phagocytes. The polypeptide is Superoxide dismutase [Cu-Zn] (sodC) (Mycolicibacterium paratuberculosis (strain ATCC BAA-968 / K-10) (Mycobacterium paratuberculosis)).